The chain runs to 342 residues: Nuclear distribution protein nudE homolog 1 (342 aa).

Residues 45-189 (REYEAELETQ…ELAVQQKQEK (145 aa)) adopt a coiled-coil conformation. Positions 89–157 (EWYRQVSALE…ERNAFLESEL (69 aa)) are interaction with PAFAH1B1. 2 disordered regions span residues 182–203 (AVQQ…TERT) and 320–342 (GTRP…KMLL). The segment covering 322-342 (RPSSTPGPMSHPSQSVVKMLL) has biased composition (polar residues).

Belongs to the nudE family. In terms of assembly, self-associates. Interacts with PAFAH1B1. Post-translationally, phosphorylated in mitosis.

Its subcellular location is the cytoplasm. It localises to the cytoskeleton. The protein resides in the microtubule organizing center. The protein localises to the centrosome. It is found in the spindle. Its subcellular location is the chromosome. It localises to the centromere. The protein resides in the kinetochore. The protein localises to the cleavage furrow. It is found in the cytoplasmic vesicle membrane. Required for centrosome duplication and formation and function of the mitotic spindle. This is Nuclear distribution protein nudE homolog 1 (NDE1) from Gallus gallus (Chicken).